Reading from the N-terminus, the 76-residue chain is MIFKVFYQKDNTRSPRRETTEALYLDLDVATKEEGVILARELLAKNTAYHVEFIDSLSDESVEYEKETGVFEITSF.

This sequence belongs to the RNA polymerase subunit epsilon family. As to quaternary structure, RNAP is composed of a core of 2 alpha, a beta and a beta' subunit. The core is associated with a delta subunit, and at least one of epsilon or omega. When a sigma factor is associated with the core the holoenzyme is formed, which can initiate transcription.

It carries out the reaction RNA(n) + a ribonucleoside 5'-triphosphate = RNA(n+1) + diphosphate. A non-essential component of RNA polymerase (RNAP). The chain is DNA-directed RNA polymerase subunit epsilon from Lactococcus lactis subsp. lactis (strain IL1403) (Streptococcus lactis).